Consider the following 142-residue polypeptide: Transcriptional regulator MraZ (142 aa).

SpoVT-AbrB domains are found at residues 5–51 (ASAL…PRPE) and 77–120 (AMDV…DAQT).

This sequence belongs to the MraZ family. As to quaternary structure, forms oligomers.

Its subcellular location is the cytoplasm. The protein resides in the nucleoid. This is Transcriptional regulator MraZ from Burkholderia mallei (strain NCTC 10247).